We begin with the raw amino-acid sequence, 204 residues long: Large ribosomal subunit protein uL4 (204 aa).

The disordered stretch occupies residues 49–75 (TKGRSDVSGGGKKPWRQKGRGGARAGS).

This sequence belongs to the universal ribosomal protein uL4 family. In terms of assembly, part of the 50S ribosomal subunit.

One of the primary rRNA binding proteins, this protein initially binds near the 5'-end of the 23S rRNA. It is important during the early stages of 50S assembly. It makes multiple contacts with different domains of the 23S rRNA in the assembled 50S subunit and ribosome. Functionally, forms part of the polypeptide exit tunnel. The sequence is that of Large ribosomal subunit protein uL4 from Campylobacter jejuni (strain RM1221).